The chain runs to 146 residues: Ribonuclease H (146 aa).

One can recognise an RNase H type-1 domain in the interval 1 to 143; that stretch reads MEKTITIYTD…CDELARLAIK (143 aa). Mg(2+) contacts are provided by aspartate 10, glutamate 48, aspartate 70, and aspartate 135.

Belongs to the RNase H family. Monomer. Requires Mg(2+) as cofactor.

It is found in the cytoplasm. It carries out the reaction Endonucleolytic cleavage to 5'-phosphomonoester.. Its function is as follows. Endonuclease that specifically degrades the RNA of RNA-DNA hybrids. The sequence is that of Ribonuclease H from Chlorobaculum parvum (strain DSM 263 / NCIMB 8327) (Chlorobium vibrioforme subsp. thiosulfatophilum).